The chain runs to 572 residues: Enolase 4 (572 aa).

The disordered stretch occupies residues 181–204 (IEPVPSPVTSPALGKKKGSGKGKK). A compositionally biased stretch (basic residues) spans 194 to 204 (GKKKGSGKGKK). Residue Glu288 participates in substrate binding. Lys468 acts as the Proton acceptor in catalysis. Substrate is bound at residue Lys519.

It belongs to the enolase family.

It carries out the reaction (2R)-2-phosphoglycerate = phosphoenolpyruvate + H2O. It functions in the pathway carbohydrate degradation; glycolysis; pyruvate from D-glyceraldehyde 3-phosphate: step 4/5. This chain is Enolase 4 (eno4), found in Xenopus laevis (African clawed frog).